The chain runs to 223 residues: MRIRRREEKENQEYKKGLWTVEEDNILMDYVLNHGTGQWNRIVRKTGLKRCGKSCRLRWMNYLSPNVNKGNFTEQEEDLIIRLHKLLGNRWSLIAKRVPGRTDNQVKNYWNTHLSKKLVGDYSSAVKTTGEDDDSLPSLFITAATTSCHHQQENVYENIAKRFDGVVSASYEDKPKQELAQNDVLMATTNDPSHYYGNNALWVHDDDFELSSLFTRNDEFCFW.

HTH myb-type domains follow at residues 11-63 (NQEY…MNYL) and 64-118 (SPNV…SKKL). 2 DNA-binding regions (H-T-H motif) span residues 39-63 (WNRI…MNYL) and 91-114 (WSLI…NTHL).

It localises to the nucleus. Functionally, regulates the production of a signal that induces hair (trichome) precursor cells on leaf primordia to differentiate. The protein is Trichome differentiation protein GL1 (GL1) of Arabidopsis lyrata (Lyre-leaved rock-cress).